Here is a 302-residue protein sequence, read N- to C-terminus: Plant UBX domain-containing protein 3 (302 aa).

Disordered regions lie at residues 1–64 (MSSK…PKHD) and 79–98 (VEGP…TGRL). One can recognise an SEP domain in the interval 113-177 (PVIHNIIFWS…NLMRRDEKCP (65 aa)). Residues 224-301 (ETLPSTSIQL…GLASSVVIQK (78 aa)) enclose the UBX domain.

In terms of assembly, interacts with CDC48A.

In Arabidopsis thaliana (Mouse-ear cress), this protein is Plant UBX domain-containing protein 3.